The sequence spans 421 residues: 4-aminobutyrate aminotransferase PuuE (421 aa).

Residues 110 to 111 (GA) and 238 to 241 (DEVQ) contribute to the pyridoxal 5'-phosphate site. K267 carries the N6-(pyridoxal phosphate)lysine modification. Residue T296 coordinates pyridoxal 5'-phosphate.

Belongs to the class-III pyridoxal-phosphate-dependent aminotransferase family. It depends on pyridoxal 5'-phosphate as a cofactor.

It carries out the reaction 4-aminobutanoate + 2-oxoglutarate = succinate semialdehyde + L-glutamate. Its pathway is amine and polyamine degradation; putrescine degradation; succinate semialdehyde from 4-aminobutanoate. Completely inhibited by succinate and low-aeration conditions. Its function is as follows. Catalyzes the transfer of the amino group from gamma-aminobutyrate (GABA) to alpha-ketoglutarate (KG) to yield succinic semialdehyde (SSA). PuuE is important for utilization of putrescine as the sole nitrogen or carbon source. The chain is 4-aminobutyrate aminotransferase PuuE (puuE) from Escherichia coli (strain K12).